Here is a 240-residue protein sequence, read N- to C-terminus: Adenylate dimethylallyltransferase (240 aa).

Belongs to the isopentenyl transferase family.

It carries out the reaction dimethylallyl diphosphate + AMP = N(6)-(dimethylallyl)adenosine 5'-phosphate + diphosphate. Functionally, transfers dimethylallyl groups to AMP as part of the biosynthesis of cytokinin phytohormones. This is Adenylate dimethylallyltransferase (izt) from Agrobacterium fabrum (strain C58 / ATCC 33970) (Agrobacterium tumefaciens (strain C58)).